The primary structure comprises 799 residues: MRSPSLARLQTRAVFGLTRSARFQPQTLLRQRCASTAAFRSAAVAPAYQSKLGQWDQRRNASAAASAVLEAAKVNPDGLSQTAIIDNLDPVEAARLDKCRNIGIAAHIDSGKTTCTERVLFYTGRIKAIHEVRGRDSVGAKMDSMDLEREKGITIQSAATFCDWVKKDKEGVEQKYHLNLIDTPGHIDFTIEVERALRVLDGAVMILCAVSGVQSQTITVDRQMRRYNVPRISFVNKMDRMGANPFKAVDQINNKLKMPAAAVQVPIGAEDEFEGVVDLIRMKALYNVGGSGEEIMEKDEIPEKVKAIAEERRTMLIETLADVDDEIAEIFLEELTPSEDQIRAAIRRATIGLKFTPVFMGSALANKSVQPMLDGVIDYLPNPAEVENLALDQKREEASVKLVPYNSLPFVGLAFKLEESNFGQLTYIRVYQGTLRKGANVFNARNSKKVKVPRIVRMHSNDMEEVSEIGAGEICAVFGIECASGDTFTDGTLGYSMSSMFVPEPVVSLSIKPKQSKDGANFSKAMARFQREDPTFRVSYDSESDQTIISGMGELHLDIYVERMRREYRVDCETGQPQVAYRETIGNRVEFDHLLKKQSGGPGEFARVMGYMEPTGALEENKFEQQVIGGSISEKFLYACEKGFNLSCEKGPLIGHKVLGTRMVINDGATHMTDSSEMSFKNATQQAFRKAFAESQPSVLEPLMKTVVTAPTEFQGDVIGLLNKRNATINDTETGVDEFTVHADCSLNGMFGFSSNLRAATQGKGEYTMEFSHYEKAPPHMQKELIAKYVKAQADRHKK.

A mitochondrion-targeting transit peptide spans 1-33 (MRSPSLARLQTRAVFGLTRSARFQPQTLLRQRC). The tr-type G domain occupies 97–384 (DKCRNIGIAA…GVIDYLPNPA (288 aa)). GTP is bound by residues 106-113 (AHIDSGKT), 182-186 (DTPGH), and 236-239 (NKMD).

The protein belongs to the TRAFAC class translation factor GTPase superfamily. Classic translation factor GTPase family. EF-G/EF-2 subfamily.

It localises to the mitochondrion. It participates in protein biosynthesis; polypeptide chain elongation. In terms of biological role, mitochondrial GTPase that catalyzes the GTP-dependent ribosomal translocation step during translation elongation. During this step, the ribosome changes from the pre-translocational (PRE) to the post-translocational (POST) state as the newly formed A-site-bound peptidyl-tRNA and P-site-bound deacylated tRNA move to the P and E sites, respectively. Catalyzes the coordinated movement of the two tRNA molecules, the mRNA and conformational changes in the ribosome. The polypeptide is Elongation factor G, mitochondrial (mef1) (Penicillium rubens (strain ATCC 28089 / DSM 1075 / NRRL 1951 / Wisconsin 54-1255) (Penicillium chrysogenum)).